Here is a 132-residue protein sequence, read N- to C-terminus: Large ribosomal subunit protein uL14 (132 aa).

This sequence belongs to the universal ribosomal protein uL14 family. Part of the 50S ribosomal subunit. Forms a cluster with proteins L3 and L24e, part of which may contact the 16S rRNA in 2 intersubunit bridges.

Binds to 23S rRNA. Forms part of two intersubunit bridges in the 70S ribosome. The chain is Large ribosomal subunit protein uL14 from Natronomonas pharaonis (strain ATCC 35678 / DSM 2160 / CIP 103997 / JCM 8858 / NBRC 14720 / NCIMB 2260 / Gabara) (Halobacterium pharaonis).